Consider the following 244-residue polypeptide: 15,16-dihydrobiliverdin:ferredoxin oxidoreductase (244 aa).

It belongs to the HY2 family.

It carries out the reaction 15,16-dihydrobiliverdin + oxidized 2[4Fe-4S]-[ferredoxin] = biliverdin IXalpha + reduced 2[4Fe-4S]-[ferredoxin] + 2 H(+). In terms of biological role, catalyzes the two-electron reduction of biliverdin IX-alpha at the C15 methine bridge. The protein is 15,16-dihydrobiliverdin:ferredoxin oxidoreductase (pebA) of Gloeobacter violaceus (strain ATCC 29082 / PCC 7421).